A 588-amino-acid chain; its full sequence is Adenine deaminase (588 aa).

Belongs to the metallo-dependent hydrolases superfamily. Adenine deaminase family. In terms of assembly, homodimer. The cofactor is Mn(2+).

It carries out the reaction adenine + H2O + H(+) = hypoxanthine + NH4(+). The protein is Adenine deaminase of Escherichia coli O45:K1 (strain S88 / ExPEC).